The chain runs to 209 residues: Peroxynitrite isomerase 2 (209 aa).

The GXWXGXG signature appears at 56–62 (GVWRGEG). Heme b-binding residues include K172 and H199.

It belongs to the nitrobindin family. Homodimer. Heme b is required as a cofactor.

It carries out the reaction peroxynitrite = nitrate. Its pathway is nitrogen metabolism. Functionally, heme-binding protein able to scavenge peroxynitrite and to protect free L-tyrosine against peroxynitrite-mediated nitration, by acting as a peroxynitrite isomerase that converts peroxynitrite to nitrate. Therefore, this protein likely plays a role in peroxynitrite sensing and in the detoxification of reactive nitrogen and oxygen species (RNS and ROS, respectively). Is able to bind nitric oxide (NO) in vitro, but may act as a sensor of peroxynitrite levels in vivo. This is Peroxynitrite isomerase 2 from Mycolicibacterium vanbaalenii (strain DSM 7251 / JCM 13017 / BCRC 16820 / KCTC 9966 / NRRL B-24157 / PYR-1) (Mycobacterium vanbaalenii).